We begin with the raw amino-acid sequence, 262 residues long: Ornithine carbamoyltransferase (262 aa).

Carbamoyl phosphate-binding positions include 3-7 (STRTR), Q30, R54, and 81-84 (HPTQ). L-ornithine is bound by residues N114, D178, and 182 to 183 (SM). Carbamoyl phosphate is bound by residues 219–222 (HCLP) and T247.

It belongs to the aspartate/ornithine carbamoyltransferase superfamily. OTCase family.

It is found in the cytoplasm. It catalyses the reaction carbamoyl phosphate + L-ornithine = L-citrulline + phosphate + H(+). It participates in amino-acid biosynthesis; L-arginine biosynthesis; L-arginine from L-ornithine and carbamoyl phosphate: step 1/3. In Neisseria cinerea, this protein is Ornithine carbamoyltransferase (argF).